The primary structure comprises 417 residues: NADH-quinone oxidoreductase subunit D (417 aa).

The protein belongs to the complex I 49 kDa subunit family. NDH-1 is composed of 14 different subunits. Subunits NuoB, C, D, E, F, and G constitute the peripheral sector of the complex.

Its subcellular location is the cell inner membrane. The enzyme catalyses a quinone + NADH + 5 H(+)(in) = a quinol + NAD(+) + 4 H(+)(out). Functionally, NDH-1 shuttles electrons from NADH, via FMN and iron-sulfur (Fe-S) centers, to quinones in the respiratory chain. The immediate electron acceptor for the enzyme in this species is believed to be ubiquinone. Couples the redox reaction to proton translocation (for every two electrons transferred, four hydrogen ions are translocated across the cytoplasmic membrane), and thus conserves the redox energy in a proton gradient. This chain is NADH-quinone oxidoreductase subunit D, found in Francisella tularensis subsp. tularensis (strain FSC 198).